The sequence spans 591 residues: L-fucose isomerase (591 aa).

Active-site proton acceptor residues include glutamate 337 and aspartate 361. Residues glutamate 337, aspartate 361, and histidine 528 each coordinate Mn(2+).

This sequence belongs to the L-fucose isomerase family. As to quaternary structure, homohexamer. Mn(2+) is required as a cofactor.

Its subcellular location is the cytoplasm. The catalysed reaction is L-fucose = L-fuculose. It functions in the pathway carbohydrate degradation; L-fucose degradation; L-lactaldehyde and glycerone phosphate from L-fucose: step 1/3. Functionally, converts the aldose L-fucose into the corresponding ketose L-fuculose. This Salmonella choleraesuis (strain SC-B67) protein is L-fucose isomerase.